A 153-amino-acid polypeptide reads, in one-letter code: Bacteriohemerythrin (153 aa).

Fe cation-binding residues include histidine 21, histidine 57, glutamate 61, histidine 76, histidine 80, histidine 115, and aspartate 120.

Belongs to the hemerythrin family. As to quaternary structure, monomer.

Oxygen-binding protein. May be involved in a storage mechanism or for delivery to oxygen-requiring enzymes. The oxygen-binding site contains two iron atoms. The sequence is that of Bacteriohemerythrin from Pseudomonas aeruginosa (strain UCBPP-PA14).